The sequence spans 310 residues: N-acetyl-gamma-glutamyl-phosphate reductase (310 aa).

Cys117 is a catalytic residue.

It belongs to the NAGSA dehydrogenase family. Type 2 subfamily.

The protein localises to the cytoplasm. The enzyme catalyses N-acetyl-L-glutamate 5-semialdehyde + phosphate + NADP(+) = N-acetyl-L-glutamyl 5-phosphate + NADPH + H(+). The protein operates within amino-acid biosynthesis; L-arginine biosynthesis; N(2)-acetyl-L-ornithine from L-glutamate: step 3/4. Its function is as follows. Catalyzes the NADPH-dependent reduction of N-acetyl-5-glutamyl phosphate to yield N-acetyl-L-glutamate 5-semialdehyde. This chain is N-acetyl-gamma-glutamyl-phosphate reductase, found in Brucella ovis (strain ATCC 25840 / 63/290 / NCTC 10512).